Consider the following 891-residue polypeptide: MAPKQKKKSSRRKKSPKPILAASEDMEPVNMESMGHPEIYPLVLTTKTQEIFNCRIDEDITDEQPYKLINKEDIFEDLRNRAAVSDFHPVKKIVQEYPGNELLLVYDKDFKYGLNFYLIGTEEGEENYLNPPEVSEEQEEYKEYIPEDVYIYKPPVSKPWVSLGSEKEIEEESVTESTKQITYMISRKRSEFGAPIKFSDQNASSVKDAYIECTAYPDKNFTLKQLEKDVGMQVIPQIKDISTQTKWTYPKNATTQYYPREFSEEEKETLKQSKPLVDFLNNASISVEIALQQNEITNTFIDDWKHLAEEEGTFGDKTDTHLKEYQSFTDLHSPTEKMITCVSWHPTIYGLIAVSVAVRLSFEDRVHFSGKLLLQPSLILFWSFSDPIHPQLMLESPDDIFCFKFCPSDPNIIAGGCINGQIVMWDITAHADRIENIKGGGSRSKKATLKPMFLLEPESNKEAMYIRHCAVSSIENGHKRVITDIHWLSDTFEINRMGSVFENRSGICCQLVTCSADCTICFWDIRPQKPLTPQTTEKKKEESIEIPFDVPSTFLHLDLSWKPLTKLKLSKGETSLDHCPTKISLNEDHLLCKTQDKMLAQSKTAKAEEMNPYHNLESGVANLLKPIDDFCTKFFVGTEEGEVIYTDWKMERDPETGRFMPKKPVNLHTIHDGIVHTIQRSPFYDDIILTVGGWNVAIWKESVMTGPLLQSCCAPKRYTSGHWSLTRPGVFYIGREDGYIDIWDLLEKTHEPAQSQNICITMITCIKPWIFSPKQQFIAIADYYGTLHILEIPWTLSHPSANEMASINHYFEREVKHLEYVEQRKKIREQEKKEMEQEMAKKKVKIYQKSKEQMEAELKMDYESYLELEKTVLINLGLIKVTEKGSYLDVM.

The span at 1 to 16 (MAPKQKKKSSRRKKSP) shows a compositional bias: basic residues. The segment at 1 to 27 (MAPKQKKKSSRRKKSPKPILAASEDME) is disordered. 4 WD repeats span residues 395 to 435 (ESPD…DRIE), 477 to 533 (GHKR…PLTP), 670 to 709 (IHDGIVHTIQRSPFYDDIILTVGGWNVAIWKESVMTGPLL), and 713 to 753 (CAPK…HEPA). Residues 817–861 (HLEYVEQRKKIREQEKKEMEQEMAKKKVKIYQKSKEQMEAELKMD) adopt a coiled-coil conformation.

As to quaternary structure, interacts with ACTR2; this interaction reduces binding of the Arp2/3 complex to the VCA domain of nucleation promoting factors. Part of the multisubunit axonemal dynein complex formed at least of two heavy chains and a number of intermediate and light chains. Found in a associated with the catalytic heavy chain DNAH2, the intermediate chain DNAI4, and the light chain DYNLT1.

The protein resides in the cytoplasm. Acts as a negative regulator of cell migration, invasion, and metastasis downstream of p53/TP53, through inhibition of Arp2/3 complex-mediated actin polymerization. Via its association with the multisubunit axonemal dynein complex, is potentially involved in the regulation of cilia function. May play a role in osteogenesis of dental tissue-derived mesenchymal stem cells. This Macaca fascicularis (Crab-eating macaque) protein is Dynein axonemal intermediate chain 3 (DNAI3).